Reading from the N-terminus, the 543-residue chain is Glutamyl-tRNA(Gln) amidotransferase subunit B-1, chloroplastic/mitochondrial (543 aa).

Positions 1-47 (MIRAGGPSPSPRGRRAGPIRLPRRAPSSTPTRAKTEEKASADASSRT) are disordered. Basic residues predominate over residues 12–23 (RGRRAGPIRLPR).

This sequence belongs to the GatB/GatE family. GatB subfamily. Subunit of the heterotrimeric GatCAB amidotransferase (AdT) complex, composed of A, B and C subunits.

It localises to the mitochondrion. The protein resides in the plastid. Its subcellular location is the chloroplast. The enzyme catalyses L-glutamyl-tRNA(Gln) + L-glutamine + ATP + H2O = L-glutaminyl-tRNA(Gln) + L-glutamate + ADP + phosphate + H(+). In terms of biological role, allows the formation of correctly charged Gln-tRNA(Gln) through the transamidation of misacylated Glu-tRNA(Gln) in chloroplasts and mitochondria. The reaction takes place in the presence of glutamine and ATP through an activated gamma-phospho-Glu-tRNA(Gln). The protein is Glutamyl-tRNA(Gln) amidotransferase subunit B-1, chloroplastic/mitochondrial of Micromonas commoda (strain RCC299 / NOUM17 / CCMP2709) (Picoplanktonic green alga).